A 97-amino-acid polypeptide reads, in one-letter code: YcgL domain-containing protein PputW619_3899 (97 aa).

Residues 3–87 (RICSIYKSPR…AEDEYIEHLP (85 aa)) form the YcgL domain.

In Pseudomonas putida (strain W619), this protein is YcgL domain-containing protein PputW619_3899.